Reading from the N-terminus, the 430-residue chain is mRNA cap guanine-N(7) methyltransferase (430 aa).

Residues 1–88 (MALRPEKPVW…YDLEERKKKQ (88 aa)) form a disordered region. Basic and acidic residues predominate over residues 15–37 (QYDRQYGKLEEPKPPREESKPGD). Residues 136 to 419 (SPIIKLRNFN…FYTVFAFRKV (284 aa)) form the mRNA cap 0 methyltransferase domain. 145–146 (NN) serves as a coordination point for mRNA. Lys149, Gly167, Asp189, Asp218, Gln244, and Tyr249 together coordinate S-adenosyl-L-methionine.

The protein belongs to the class I-like SAM-binding methyltransferase superfamily. mRNA cap 0 methyltransferase family.

Its subcellular location is the nucleus. The enzyme catalyses a 5'-end (5'-triphosphoguanosine)-ribonucleoside in mRNA + S-adenosyl-L-methionine = a 5'-end (N(7)-methyl 5'-triphosphoguanosine)-ribonucleoside in mRNA + S-adenosyl-L-homocysteine. Functionally, responsible for methylating the 5'-cap structure of mRNAs. The chain is mRNA cap guanine-N(7) methyltransferase (ABD1) from Eremothecium gossypii (strain ATCC 10895 / CBS 109.51 / FGSC 9923 / NRRL Y-1056) (Yeast).